We begin with the raw amino-acid sequence, 332 residues long: MKKIAVDAMGGDNAPQALVEGVNRAVQEFSDIEILLYGDEAKIKPYLTAGERVRIIHTEEKIDSDDEPTKAIRQKKEASMVLAAKAVKAGEADAMLSAGNTGALLAAGFFIVGRIKNIDRPGLLSTMPTVGGQGFDMLDLGANAENTAHHLHQYATLGSFYAENVRGIKKPRVGLLNNGTESSKGDPLRKEAYELLSGDSTLNFIGNVEARDLMDDVADVVVADGFTGNAVLKSIEGTAISIMGQLKKSILGGGFKAKLGAWLLKDSLRGLKNSLDYSSAGGAVLFGLKAPVVKTHGSSDAKAVYSTIRQIRTMLETDVVGKSVIEFSDAKE.

The protein belongs to the PlsX family. Homodimer. Probably interacts with PlsY.

It is found in the cytoplasm. It catalyses the reaction a fatty acyl-[ACP] + phosphate = an acyl phosphate + holo-[ACP]. It participates in lipid metabolism; phospholipid metabolism. Catalyzes the reversible formation of acyl-phosphate (acyl-PO(4)) from acyl-[acyl-carrier-protein] (acyl-ACP). This enzyme utilizes acyl-ACP as fatty acyl donor, but not acyl-CoA. This chain is Phosphate acyltransferase, found in Streptococcus sanguinis (strain SK36).